The sequence spans 229 residues: Ribosome maturation factor RimM (229 aa).

The disordered stretch occupies residues 1 to 37 (MAGHDSGNAKRGRSPSFGVFVRKPVERTSAKGTSDGA). Residues 148–229 (ADEFYWVDLI…RVVVDWEADY (82 aa)) form the PRC barrel domain.

The protein belongs to the RimM family. As to quaternary structure, binds ribosomal protein uS19.

It is found in the cytoplasm. Its function is as follows. An accessory protein needed during the final step in the assembly of 30S ribosomal subunit, possibly for assembly of the head region. Essential for efficient processing of 16S rRNA. May be needed both before and after RbfA during the maturation of 16S rRNA. It has affinity for free ribosomal 30S subunits but not for 70S ribosomes. The polypeptide is Ribosome maturation factor RimM (Burkholderia pseudomallei (strain 668)).